Consider the following 368-residue polypeptide: Germination protease (368 aa).

Positions 1–15 (MKEPLDLSKYSVRTD) are excised as a propeptide.

It belongs to the peptidase A25 family. In terms of assembly, homotetramer. In terms of processing, autoproteolytically processed. The inactive tetrameric zymogen termed p46 autoprocesses to a smaller form termed p41, which is active only during spore germination.

The enzyme catalyses Endopeptidase action with P4 Glu or Asp, P1 preferably Glu &gt; Asp, P1' hydrophobic and P2' Ala.. Functionally, initiates the rapid degradation of small, acid-soluble proteins during spore germination. The sequence is that of Germination protease from Bacillus anthracis (strain A0248).